The chain runs to 151 residues: Shadow of prion protein (151 aa).

Residues 1–24 (MNWAPATCWALLLAAAFLCDSGAA) form the signal peptide. Residues 89–113 (WRRAAGPGERGLEDEEDGVPGGNGT) are disordered. The N-linked (GlcNAc...) asparagine glycan is linked to Asn111. A lipid anchor (GPI-anchor amidated glycine) is attached at Gly126. A propeptide spans 127 to 151 (AGPTRGPRLCLVLGGALGALGLLRP) (removed in mature form).

The protein belongs to the SPRN family. Post-translationally, N-glycosylated. As to expression, mainly expressed in brain. In brain, it is expressed in hippocampus.

It is found in the cell membrane. Its function is as follows. Prion-like protein that has PrP(C)-like neuroprotective activity. May act as a modulator for the biological actions of normal and abnormal PrP. The chain is Shadow of prion protein (SPRN) from Homo sapiens (Human).